The chain runs to 131 residues: Small ribosomal subunit protein uS9 (131 aa).

Belongs to the universal ribosomal protein uS9 family.

This is Small ribosomal subunit protein uS9 from Mycoplasmopsis synoviae (strain 53) (Mycoplasma synoviae).